We begin with the raw amino-acid sequence, 178 residues long: Large ribosomal subunit protein bL25 (178 aa).

It belongs to the bacterial ribosomal protein bL25 family. CTC subfamily. As to quaternary structure, part of the 50S ribosomal subunit; part of the 5S rRNA/L5/L18/L25 subcomplex. Contacts the 5S rRNA. Binds to the 5S rRNA independently of L5 and L18.

Functionally, this is one of the proteins that binds to the 5S RNA in the ribosome where it forms part of the central protuberance. This Helicobacter acinonychis (strain Sheeba) protein is Large ribosomal subunit protein bL25.